The sequence spans 284 residues: 2-dehydro-3-deoxyphosphooctonate aldolase (284 aa).

The protein belongs to the KdsA family.

The protein localises to the cytoplasm. It catalyses the reaction D-arabinose 5-phosphate + phosphoenolpyruvate + H2O = 3-deoxy-alpha-D-manno-2-octulosonate-8-phosphate + phosphate. Its pathway is carbohydrate biosynthesis; 3-deoxy-D-manno-octulosonate biosynthesis; 3-deoxy-D-manno-octulosonate from D-ribulose 5-phosphate: step 2/3. It functions in the pathway bacterial outer membrane biogenesis; lipopolysaccharide biosynthesis. The protein is 2-dehydro-3-deoxyphosphooctonate aldolase of Histophilus somni (strain 129Pt) (Haemophilus somnus).